Here is a 631-residue protein sequence, read N- to C-terminus: 30-kDa cleavage and polyadenylation specificity factor 30 (631 aa).

The tract at residues 12 to 38 is disordered; it reads EGGLDSGPVQNTASVPVAPPENSSSAA. C3H1-type zinc fingers lie at residues 60–87, 88–112, and 114–141; these read SFRQ…HQFD, KARM…VYKH, and NEDI…HAKL. The interval 179–234 is disordered; sequence QDRPQGQVPMQGQPQESGNLQQQQQQQPQQSQHQVSQTLIPNPADQTNRTSHPLPQ. Positions 182–215 are enriched in low complexity; that stretch reads PQGQVPMQGQPQESGNLQQQQQQQPQQSQHQVSQ. The span at 216-231 shows a compositional bias: polar residues; that stretch reads TLIPNPADQTNRTSHP. Positions 237–372 constitute a YTH domain; the sequence is NRYFVVKSNN…SVGEQLASLL (136 aa). Residues 392–407 are compositionally biased toward basic and acidic residues; the sequence is EEEKAKGVNPESRAEN. Disordered regions lie at residues 392 to 447 and 541 to 631; these read EEEK…RGIM and PHMG…KKRR. A compositionally biased stretch (acidic residues) spans 412–432; it reads PFEDNEEEEEEEDESEEEEES. The segment covering 573–583 has biased composition (basic and acidic residues); that stretch reads KTPERSDERGV. Residues serine 610 and serine 612 each carry the phosphoserine modification. Positions 621–631 are enriched in basic residues; that stretch reads RSRHGEGKKRR.

The protein belongs to the CPSF4/YTH1 family. As to quaternary structure, component of the cleavage and polyadenylation specificity factor (CPSF) complex. Can form homodimers. Binds to calmodulin. Forms a complex with cleavage and polyadenylation specificity factor (CPSF) subunits CPSF73-I, CPSF73-II, CPSF100, CPSF160, CFIS2, FIPS3, FIPS5, PAPS2, PAPS3, CLPS3, PCFS1, PCFS4, CSTF50 and CSTF77. Expressed in seedlings, roots, leaves, siliques, stems and flowers.

It is found in the nucleus. The protein resides in the cytoplasm. With respect to regulation, endonuclease activity is repressed by the N-terminal domain of FIPS5. Nuclease activity is inhibited by zinc (&gt;100 uM), cadmium in a progressive manner (50 percent activity at 1 mM Cd(2+)), and high salt levels (e.g. KCl or NaCl &gt;600 mM). Stimulated by ATP in the presence of Zn(2+), even at inhibitory zinc concentrations. Elevated temperatures prevent RNA-binding at 55 degrees Celsius, but endonuclease activity at 70 degrees Celsius. The sulfhydryl reagent dithiothreitol (DTT) inhibits both RNA-binding and nuclease activities. In terms of biological role, component of the cleavage and polyadenylation specificity factor (CPSF) complex that play a key role in pre-mRNA 3'-end formation. May interact with poly(A) polymerase and other factors to bring about cleavage and poly(A) addition. Mediates poly(A) site selection. Binds RNA in a calcium-dependent manner. Exhibits endonuclease activity with an ability to nick and degrade linear as well as circular single-stranded RNA that leaves RNA 3' ends with hydroxyl groups, thus mediating processing of the pre-mRNA as a prelude to the polyadenylation. Involved in the post-transcriptional control, probably via poly(A) addition, of the responses of plants to stress, especially genes mediating tolerance to oxidative stress. Plays a role in the regulation of salicylic acid (SA) production via the control of messenger RNA 3' end processing, thus being a key component of programmed cell death and plant immune responses required for resistance to virulent Pseudomonas syringae pv tomato DC3000 (Pst). This chain is 30-kDa cleavage and polyadenylation specificity factor 30, found in Arabidopsis thaliana (Mouse-ear cress).